The chain runs to 1563 residues: Pentafunctional AROM polypeptide (1563 aa).

The tract at residues methionine 1–aspartate 382 is 3-dehydroquinate synthase. Residues aspartate 48 to asparagine 50, glutamate 82 to lysine 85, glycine 113 to valine 115, and aspartate 118 contribute to the NAD(+) site. 7-phospho-2-dehydro-3-deoxy-D-arabino-heptonate is bound at residue arginine 129. Position 138-139 (threonine 138–threonine 139) interacts with NAD(+). Residues aspartate 145 and lysine 151 each coordinate 7-phospho-2-dehydro-3-deoxy-D-arabino-heptonate. Lysine 160 is a binding site for NAD(+). 7-phospho-2-dehydro-3-deoxy-D-arabino-heptonate is bound at residue asparagine 161. NAD(+) is bound by residues phenylalanine 178–threonine 181 and asparagine 189. Glutamate 193 lines the Zn(2+) pocket. 7-phospho-2-dehydro-3-deoxy-D-arabino-heptonate is bound by residues glutamate 193–lysine 196 and lysine 248. The active-site Proton acceptor; for 3-dehydroquinate synthase activity is the glutamate 258. Residues arginine 262 to asparagine 266 and histidine 269 contribute to the 7-phospho-2-dehydro-3-deoxy-D-arabino-heptonate site. Histidine 269 serves as a coordination point for Zn(2+). Histidine 273 functions as the Proton acceptor; for 3-dehydroquinate synthase activity in the catalytic mechanism. Histidine 285 and lysine 354 together coordinate 7-phospho-2-dehydro-3-deoxy-D-arabino-heptonate. Histidine 285 serves as a coordination point for Zn(2+). An EPSP synthase region spans residues valine 395–serine 834. Cysteine 816 (for EPSP synthase activity) is an active-site residue. The segment covering leucine 836–glutamate 850 has biased composition (basic and acidic residues). The disordered stretch occupies residues leucine 836–proline 857. A shikimate kinase region spans residues proline 857–serine 1051. Glycine 864–serine 871 contributes to the ATP binding site. Residues leucine 1052–glutamate 1265 form a 3-dehydroquinase region. Histidine 1168 serves as the catalytic Proton acceptor; for 3-dehydroquinate dehydratase activity. Lysine 1196 acts as the Schiff-base intermediate with substrate; for 3-dehydroquinate dehydratase activity in catalysis. A shikimate dehydrogenase region spans residues proline 1278–asparagine 1563.

In the N-terminal section; belongs to the sugar phosphate cyclases superfamily. Dehydroquinate synthase family. The protein in the 2nd section; belongs to the EPSP synthase family. It in the 3rd section; belongs to the shikimate kinase family. This sequence in the 4th section; belongs to the type-I 3-dehydroquinase family. In the C-terminal section; belongs to the shikimate dehydrogenase family. Homodimer. The cofactor is Zn(2+).

Its subcellular location is the cytoplasm. The enzyme catalyses 7-phospho-2-dehydro-3-deoxy-D-arabino-heptonate = 3-dehydroquinate + phosphate. The catalysed reaction is 3-dehydroquinate = 3-dehydroshikimate + H2O. It carries out the reaction shikimate + NADP(+) = 3-dehydroshikimate + NADPH + H(+). It catalyses the reaction shikimate + ATP = 3-phosphoshikimate + ADP + H(+). The enzyme catalyses 3-phosphoshikimate + phosphoenolpyruvate = 5-O-(1-carboxyvinyl)-3-phosphoshikimate + phosphate. Its pathway is metabolic intermediate biosynthesis; chorismate biosynthesis; chorismate from D-erythrose 4-phosphate and phosphoenolpyruvate: step 2/7. It participates in metabolic intermediate biosynthesis; chorismate biosynthesis; chorismate from D-erythrose 4-phosphate and phosphoenolpyruvate: step 3/7. The protein operates within metabolic intermediate biosynthesis; chorismate biosynthesis; chorismate from D-erythrose 4-phosphate and phosphoenolpyruvate: step 4/7. It functions in the pathway metabolic intermediate biosynthesis; chorismate biosynthesis; chorismate from D-erythrose 4-phosphate and phosphoenolpyruvate: step 5/7. Its pathway is metabolic intermediate biosynthesis; chorismate biosynthesis; chorismate from D-erythrose 4-phosphate and phosphoenolpyruvate: step 6/7. In terms of biological role, the AROM polypeptide catalyzes 5 consecutive enzymatic reactions in prechorismate polyaromatic amino acid biosynthesis. In Sordaria macrospora (strain ATCC MYA-333 / DSM 997 / K(L3346) / K-hell), this protein is Pentafunctional AROM polypeptide.